A 201-amino-acid chain; its full sequence is Ras-related protein Rab-9B (201 aa).

V18, G19, K20, S21, S22, D33, S34, A36, H38, and T39 together coordinate GTP. Position 21 (S21) interacts with Mg(2+). The short motif at 31 to 42 is the Switch 1 element; that stretch reads KFDSQAFHTIGV. S34 is modified (phosphoserine). Residues T39 and D62 each contribute to the Mg(2+) site. Residues 64 to 78 carry the Switch 2 motif; sequence AGQERFKSLRTPFYR. Residues G65, N124, K125, A155, and K156 each coordinate GTP. 2 S-geranylgeranyl cysteine lipidation sites follow: C200 and C201.

This sequence belongs to the small GTPase superfamily. Rab family. Interacts (GTP-bound form) with SGSM1; the GDP-bound form has much lower affinity for SGSM1. The GTP-bound form but not the GDP-bound form interacts with HPS4 and the BLOC-3 complex (heterodimer of HPS1 and HPS4) but does not interact with HPS1 alone. Interacts (GTP-bound form) with NDE1. The cofactor is Mg(2+).

Its subcellular location is the cell membrane. The protein localises to the cytoplasmic vesicle. It is found in the phagosome membrane. The catalysed reaction is GTP + H2O = GDP + phosphate + H(+). Its activity is regulated as follows. Regulated by guanine nucleotide exchange factors (GEFs) which promote the exchange of bound GDP for free GTP. Regulated by GTPase activating proteins (GAPs) which increase the GTP hydrolysis activity. Inhibited by GDP dissociation inhibitors (GDIs). Functionally, the small GTPases Rab are key regulators of intracellular membrane trafficking, from the formation of transport vesicles to their fusion with membranes. Rabs cycle between an inactive GDP-bound form and an active GTP-bound form that is able to recruit to membranes different sets of downstream effectors directly responsible for vesicle formation, movement, tethering and fusion. RAB9B is involved in the transport of proteins between the endosomes and the trans Golgi network. May use NDE1/NDEL1 as an effector to interact with the dynein motor complex in order to control retrograde trafficking of RAB9-associated late endosomes to the TGN. The chain is Ras-related protein Rab-9B (RAB9B) from Pongo abelii (Sumatran orangutan).